A 415-amino-acid chain; its full sequence is Serine hydroxymethyltransferase 1 (415 aa).

Residues Leu-122 and 126 to 128 contribute to the (6S)-5,6,7,8-tetrahydrofolate site; that span reads GHL. Lys-230 is subject to N6-(pyridoxal phosphate)lysine.

Belongs to the SHMT family. In terms of assembly, homodimer. Requires pyridoxal 5'-phosphate as cofactor.

The protein resides in the cytoplasm. The enzyme catalyses (6R)-5,10-methylene-5,6,7,8-tetrahydrofolate + glycine + H2O = (6S)-5,6,7,8-tetrahydrofolate + L-serine. Its pathway is one-carbon metabolism; tetrahydrofolate interconversion. It functions in the pathway amino-acid biosynthesis; glycine biosynthesis; glycine from L-serine: step 1/1. Catalyzes the reversible interconversion of serine and glycine with tetrahydrofolate (THF) serving as the one-carbon carrier. This reaction serves as the major source of one-carbon groups required for the biosynthesis of purines, thymidylate, methionine, and other important biomolecules. Also exhibits THF-independent aldolase activity toward beta-hydroxyamino acids, producing glycine and aldehydes, via a retro-aldol mechanism. The polypeptide is Serine hydroxymethyltransferase 1 (Burkholderia thailandensis (strain ATCC 700388 / DSM 13276 / CCUG 48851 / CIP 106301 / E264)).